The sequence spans 59 residues: uncharacterized protein (59 aa).

The N-terminal stretch at 1-21 is a signal peptide; sequence MYLFYVLLSSLFLSALIYVIG. The Extracellular portion of the chain corresponds to 22–24; the sequence is KSH. A helical membrane pass occupies residues 25–45; that stretch reads PNLFMFISLFVNVVTILYLVF. The Cytoplasmic segment spans residues 46–59; that stretch reads KDYGQYIIAKPINT.

It is found in the host membrane. This is an uncharacterized protein from Acidianus convivator (ABV).